We begin with the raw amino-acid sequence, 2067 residues long: Dedicator of cytokinesis protein 11 (2067 aa).

One can recognise a PH domain in the interval 162–269 (GVMKQGWLQK…WVNTIKQALL (108 aa)). The disordered stretch occupies residues 274-302 (DRRNGSETSEGSLDDDSSSQGKPESITES). Over residues 291 to 302 (SSQGKPESITES) the composition is skewed to polar residues. In terms of domain architecture, C2 DOCK-type spans 643–820 (NNHLYIYPQQ…PLFKVRAYVA (178 aa)). The segment at 1224–1267 (SSTIVDKEPSGSVTQNGLSRRGESRGSMYGDPGTPDINELHRRG) is disordered. One can recognise a DOCKER domain in the interval 1614 to 2040 (RSYASTPELR…LSEIIHEQIF (427 aa)).

This sequence belongs to the DOCK family.

In terms of biological role, guanine nucleotide-exchange factor (GEF) that activates CDC42 by exchanging bound GDP for free GTP. The sequence is that of Dedicator of cytokinesis protein 11 from Danio rerio (Zebrafish).